Consider the following 126-residue polypeptide: Aspartate 1-decarboxylase (126 aa).

Catalysis depends on serine 25, which acts as the Schiff-base intermediate with substrate; via pyruvic acid. Pyruvic acid (Ser) is present on serine 25. Threonine 57 is a substrate binding site. The Proton donor role is filled by tyrosine 58. Residue 73–75 (GAA) participates in substrate binding.

It belongs to the PanD family. As to quaternary structure, heterooctamer of four alpha and four beta subunits. Pyruvate is required as a cofactor. Is synthesized initially as an inactive proenzyme, which is activated by self-cleavage at a specific serine bond to produce a beta-subunit with a hydroxyl group at its C-terminus and an alpha-subunit with a pyruvoyl group at its N-terminus.

The protein localises to the cytoplasm. It catalyses the reaction L-aspartate + H(+) = beta-alanine + CO2. Its pathway is cofactor biosynthesis; (R)-pantothenate biosynthesis; beta-alanine from L-aspartate: step 1/1. Catalyzes the pyruvoyl-dependent decarboxylation of aspartate to produce beta-alanine. This is Aspartate 1-decarboxylase from Proteus mirabilis (strain HI4320).